The following is a 314-amino-acid chain: MEWSEVEVHTTNEAVEPVANVLTEFGAAGVSIEDVADFLREREDKFGEIYALRREDYPEDGVIIKAYFLKTTEFVEQIPEIEQTLKNLSTFDIPLGKFQFVVNDVDDEEWATAWKKYYHPVQITDRITIVPSWESYTPSANEIIIELDPGMAFGTGTHPTTQLCIRALSNYLQPGDEVIDVGTGSGVLSIASAKLGAKSILATDLDEIATRAAEENITLNKTEHIITVKQNNLLQDINKTNVDIVVANILAEVILLFPEDVYKALKPGGVFIASGIIEDKAKVVEEALKNAGLIIEKMEQQGDWVAIISKRGVE.

S-adenosyl-L-methionine-binding residues include T161, G182, D204, and N248.

It belongs to the methyltransferase superfamily. PrmA family.

The protein resides in the cytoplasm. The catalysed reaction is L-lysyl-[protein] + 3 S-adenosyl-L-methionine = N(6),N(6),N(6)-trimethyl-L-lysyl-[protein] + 3 S-adenosyl-L-homocysteine + 3 H(+). Methylates ribosomal protein L11. In Listeria monocytogenes serotype 1/2a (strain 10403S), this protein is Ribosomal protein L11 methyltransferase.